Reading from the N-terminus, the 284-residue chain is Diaminopimelate epimerase (284 aa).

2 residues coordinate substrate: asparagine 14 and asparagine 67. The active-site Proton donor is cysteine 76. Substrate-binding positions include 77 to 78 (GN), asparagine 166, asparagine 199, and 217 to 218 (ER). The Proton acceptor role is filled by cysteine 226. Position 227–228 (227–228 (GT)) interacts with substrate.

The protein belongs to the diaminopimelate epimerase family. Homodimer.

It localises to the cytoplasm. It catalyses the reaction (2S,6S)-2,6-diaminopimelate = meso-2,6-diaminopimelate. Its pathway is amino-acid biosynthesis; L-lysine biosynthesis via DAP pathway; DL-2,6-diaminopimelate from LL-2,6-diaminopimelate: step 1/1. In terms of biological role, catalyzes the stereoinversion of LL-2,6-diaminopimelate (L,L-DAP) to meso-diaminopimelate (meso-DAP), a precursor of L-lysine and an essential component of the bacterial peptidoglycan. The protein is Diaminopimelate epimerase of Bacillus velezensis (strain DSM 23117 / BGSC 10A6 / LMG 26770 / FZB42) (Bacillus amyloliquefaciens subsp. plantarum).